The following is a 263-amino-acid chain: Ribosomal RNA small subunit methyltransferase A (263 aa).

6 residues coordinate S-adenosyl-L-methionine: N20, L22, G47, E68, D90, and N110.

This sequence belongs to the class I-like SAM-binding methyltransferase superfamily. rRNA adenine N(6)-methyltransferase family. RsmA subfamily.

Its subcellular location is the cytoplasm. The catalysed reaction is adenosine(1518)/adenosine(1519) in 16S rRNA + 4 S-adenosyl-L-methionine = N(6)-dimethyladenosine(1518)/N(6)-dimethyladenosine(1519) in 16S rRNA + 4 S-adenosyl-L-homocysteine + 4 H(+). Functionally, specifically dimethylates two adjacent adenosines (A1518 and A1519) in the loop of a conserved hairpin near the 3'-end of 16S rRNA in the 30S particle. May play a critical role in biogenesis of 30S subunits. The sequence is that of Ribosomal RNA small subunit methyltransferase A from Chlorobium limicola (strain DSM 245 / NBRC 103803 / 6330).